The primary structure comprises 294 residues: Phenylalanine-4-hydroxylase (294 aa).

Positions 1–20 are disordered; that stretch reads MSGDGLSNGPPPGARPDWTI. Residues H129, H134, and E175 each coordinate Fe cation.

This sequence belongs to the biopterin-dependent aromatic amino acid hydroxylase family. The cofactor is Fe(2+).

The enzyme catalyses (6R)-L-erythro-5,6,7,8-tetrahydrobiopterin + L-phenylalanine + O2 = (4aS,6R)-4a-hydroxy-L-erythro-5,6,7,8-tetrahydrobiopterin + L-tyrosine. Its pathway is amino-acid degradation; L-phenylalanine degradation; acetoacetate and fumarate from L-phenylalanine: step 1/6. This is Phenylalanine-4-hydroxylase (phhA) from Caulobacter vibrioides (strain ATCC 19089 / CIP 103742 / CB 15) (Caulobacter crescentus).